Here is a 262-residue protein sequence, read N- to C-terminus: Shikimate dehydrogenase (NADP(+)) (262 aa).

Shikimate-binding positions include 13–15 (SLS) and threonine 59. The active-site Proton acceptor is the lysine 63. Aspartate 75 contacts NADP(+). Positions 84 and 99 each coordinate shikimate. NADP(+)-binding positions include 122 to 126 (GAGGA), 144 to 149 (NRTLEK), and methionine 205. Position 207 (tyrosine 207) interacts with shikimate. Glycine 228 contributes to the NADP(+) binding site.

It belongs to the shikimate dehydrogenase family. As to quaternary structure, homodimer.

The enzyme catalyses shikimate + NADP(+) = 3-dehydroshikimate + NADPH + H(+). It participates in metabolic intermediate biosynthesis; chorismate biosynthesis; chorismate from D-erythrose 4-phosphate and phosphoenolpyruvate: step 4/7. In terms of biological role, involved in the biosynthesis of the chorismate, which leads to the biosynthesis of aromatic amino acids. Catalyzes the reversible NADPH linked reduction of 3-dehydroshikimate (DHSA) to yield shikimate (SA). In Ignicoccus hospitalis (strain KIN4/I / DSM 18386 / JCM 14125), this protein is Shikimate dehydrogenase (NADP(+)).